A 359-amino-acid chain; its full sequence is Threonine dehydratase biosynthetic, chloroplastic (359 aa).

2 ACT-like domains span residues 184–256 (ALLA…NFSH) and 278–349 (IFGE…LDNS).

The protein belongs to the serine/threonine dehydratase family. In terms of assembly, homotetramer. The cofactor is pyridoxal 5'-phosphate. Floral buds of untreated plants. After ABA treatment or mechanical wounding is mostly accumulated in leaves, to a lesser extent in stems, but not in roots. Expressed in anthers, carpel leaves, pith cells, sepals and petals. Not expressed in stomium, vascular bundles, epidermal cells or pollen mother cells.

Its subcellular location is the plastid. The protein localises to the chloroplast. The catalysed reaction is L-threonine = 2-oxobutanoate + NH4(+). It participates in amino-acid biosynthesis; L-isoleucine biosynthesis; 2-oxobutanoate from L-threonine: step 1/1. This chain is Threonine dehydratase biosynthetic, chloroplastic, found in Solanum tuberosum (Potato).